Here is an 888-residue protein sequence, read N- to C-terminus: MLEKSFVPADHENALYDAWEKSGAFRAHPDQPGEPFSIMFPPPNVTGTLHLGHSLNFVLQDMLIRWKRQEGFNVLWQPGTDHAGIATQMVVERALDKEGTSRTALGREGFLERVWDWKQEYGGTIVKQLRKLGASADWERERFTMDDGLSRAVRKVFVTLYNEGLIYRDRRLVNWDPKFRSAISDLEVENHETKGSMWYIRYPLEDGRTITVATTRPETMLGDVAVAVHPEDERYADMIGKTVILPLTGRRIPVVADLHSDPEKGTGAVKITPAHDFNDFEVGKRHDLPAPTVLDETACLWIEEIRPELRDVEGLASVAFVETLNGLSREEGRKQVVAELERLEWLEKIEPHKLQVPHAERGGAIVEPRLTLQWYCDAKTLSGPAVEAVESGKIAFEPRQWENTFHAWMRDIQPWCISRQLWWGHRIPAWYGADGKVYVAENEQDAQVQAGEGVSLTQDEDVLDTWFSSALWPFTTLGWPDRTEELARYYPTSVLVTGFDIIFFWVARMMMMGLHFMDDVPFRTVLIHGLVRDEKGQKMSKSKGNGLDPLDLVAEFGADATRLAICAGTGPGRDIKLGRKRVEEHRAFVTKLWNAARFLEMNGAKPTEDFDPASVKSALGRWILTEANDAITEAGRALSVYRFDEYASCCYRFVWSRFCDWFVEFSKPVFAAENEETAELRAVSAHVLGLILRLMQPVIPFVTATLWQELGYPGKFEEIRWPEIMTVTRADEARAELDWVIRLIGDVRTVRSEMNIPPSQKAPLLLRDAAPENLERAKTWAEAIGRMARVSDVGVVGEDAPRNAAQLVLDEATVFIPLEGLIDLDAERARLAKEITRIEGEILKVTRKLDNADFVARAKPEVVEENHDRLATFQSDLERLKAALGRLA.

The 'HIGH' region motif lies at 43 to 53 (PNVTGTLHLGH). The 'KMSKS' region signature appears at 538 to 542 (KMSKS). Lys541 is a binding site for ATP. Residues 821 to 888 (LIDLDAERAR…RLKAALGRLA (68 aa)) adopt a coiled-coil conformation.

The protein belongs to the class-I aminoacyl-tRNA synthetase family. ValS type 1 subfamily. As to quaternary structure, monomer.

The protein localises to the cytoplasm. The enzyme catalyses tRNA(Val) + L-valine + ATP = L-valyl-tRNA(Val) + AMP + diphosphate. In terms of biological role, catalyzes the attachment of valine to tRNA(Val). As ValRS can inadvertently accommodate and process structurally similar amino acids such as threonine, to avoid such errors, it has a 'posttransfer' editing activity that hydrolyzes mischarged Thr-tRNA(Val) in a tRNA-dependent manner. The protein is Valine--tRNA ligase of Gluconobacter oxydans (strain 621H) (Gluconobacter suboxydans).